A 558-amino-acid polypeptide reads, in one-letter code: Dihydroxy-acid dehydratase (558 aa).

Cys-51 serves as a coordination point for [2Fe-2S] cluster. Asp-83 lines the Mg(2+) pocket. Cys-124 serves as a coordination point for [2Fe-2S] cluster. Mg(2+) contacts are provided by Asp-125 and Lys-126. Residue Lys-126 is modified to N6-carboxylysine. Cys-196 serves as a coordination point for [2Fe-2S] cluster. Mg(2+) is bound at residue Glu-447. Catalysis depends on Ser-473, which acts as the Proton acceptor.

The protein belongs to the IlvD/Edd family. Homodimer. Requires [2Fe-2S] cluster as cofactor. It depends on Mg(2+) as a cofactor.

The catalysed reaction is (2R)-2,3-dihydroxy-3-methylbutanoate = 3-methyl-2-oxobutanoate + H2O. It catalyses the reaction (2R,3R)-2,3-dihydroxy-3-methylpentanoate = (S)-3-methyl-2-oxopentanoate + H2O. It functions in the pathway amino-acid biosynthesis; L-isoleucine biosynthesis; L-isoleucine from 2-oxobutanoate: step 3/4. The protein operates within amino-acid biosynthesis; L-valine biosynthesis; L-valine from pyruvate: step 3/4. Functions in the biosynthesis of branched-chain amino acids. Catalyzes the dehydration of (2R,3R)-2,3-dihydroxy-3-methylpentanoate (2,3-dihydroxy-3-methylvalerate) into 2-oxo-3-methylpentanoate (2-oxo-3-methylvalerate) and of (2R)-2,3-dihydroxy-3-methylbutanoate (2,3-dihydroxyisovalerate) into 2-oxo-3-methylbutanoate (2-oxoisovalerate), the penultimate precursor to L-isoleucine and L-valine, respectively. This is Dihydroxy-acid dehydratase from Flavobacterium psychrophilum (strain ATCC 49511 / DSM 21280 / CIP 103535 / JIP02/86).